A 250-amino-acid polypeptide reads, in one-letter code: Probable septum site-determining protein MinC (250 aa).

Residues 110 to 143 (SGARERPLEPEPEVVKKPEPAPAPPPPPEPEVRP) form a disordered region. The span at 112-128 (ARERPLEPEPEVVKKPE) shows a compositional bias: basic and acidic residues. Positions 129–138 (PAPAPPPPPE) are enriched in pro residues.

The protein belongs to the MinC family. Interacts with MinD and FtsZ.

In terms of biological role, cell division inhibitor that blocks the formation of polar Z ring septums. Rapidly oscillates between the poles of the cell to destabilize FtsZ filaments that have formed before they mature into polar Z rings. Prevents FtsZ polymerization. In Pseudomonas putida (strain ATCC 47054 / DSM 6125 / CFBP 8728 / NCIMB 11950 / KT2440), this protein is Probable septum site-determining protein MinC.